A 159-amino-acid chain; its full sequence is MIDPDGFRPNVGIILTNDAGQVLWARRINQDAWQFPQGGINPQETPEDALYRELNEEVGLERHDVQILACTRGWLRYRLPQRLVRTHSQPLCIGQKQKWFLLRLISNEQRVRMDLTGKPEFDGWRWVSYWYPLGQVVTFKREVYRRALKELAPRLLSRD.

The 144-residue stretch at 6 to 149 (GFRPNVGIIL…KREVYRRALK (144 aa)) folds into the Nudix hydrolase domain. The Nudix box motif lies at 38–59 (GGINPQETPEDALYRELNEEVG).

Belongs to the Nudix hydrolase family. RppH subfamily. A divalent metal cation is required as a cofactor.

Its function is as follows. Accelerates the degradation of transcripts by removing pyrophosphate from the 5'-end of triphosphorylated RNA, leading to a more labile monophosphorylated state that can stimulate subsequent ribonuclease cleavage. This is RNA pyrophosphohydrolase from Pseudomonas savastanoi pv. phaseolicola (strain 1448A / Race 6) (Pseudomonas syringae pv. phaseolicola (strain 1448A / Race 6)).